Here is a 108-residue protein sequence, read N- to C-terminus: UPF0102 protein Sden_0272 (108 aa).

This sequence belongs to the UPF0102 family.

This chain is UPF0102 protein Sden_0272, found in Shewanella denitrificans (strain OS217 / ATCC BAA-1090 / DSM 15013).